The following is a 68-amino-acid chain: Protein transport protein Sec61 gamma-1 subunit (68 aa).

Over 1 to 32 (MDKVVKFAEPGRAFAKDSIRLVKRCTKPDRKE) the chain is Cytoplasmic. Residues 33 to 61 (FQKIAIATAVGFAIMGFIGFFVKLIHIPI) form a helical membrane-spanning segment. Topologically, residues 62 to 68 (NNIIVGS) are extracellular.

This sequence belongs to the SecE/SEC61-gamma family. In terms of assembly, heterotrimeric complex composed of SEC61-alpha, SEC61-beta and SEC61-gamma.

It is found in the endoplasmic reticulum membrane. Necessary for protein translocation in the endoplasmic reticulum. The polypeptide is Protein transport protein Sec61 gamma-1 subunit (SEC61G1) (Drosophila melanogaster (Fruit fly)).